We begin with the raw amino-acid sequence, 627 residues long: 1-deoxy-D-xylulose-5-phosphate synthase (627 aa).

Residues H74 and 115–117 each bind thiamine diphosphate; that span reads GHA. D146 lines the Mg(2+) pocket. Residues 147–148, N175, F284, and E364 each bind thiamine diphosphate; that span reads AA. N175 contacts Mg(2+).

Belongs to the transketolase family. DXPS subfamily. In terms of assembly, homodimer. Mg(2+) serves as cofactor. The cofactor is thiamine diphosphate.

It carries out the reaction D-glyceraldehyde 3-phosphate + pyruvate + H(+) = 1-deoxy-D-xylulose 5-phosphate + CO2. The protein operates within metabolic intermediate biosynthesis; 1-deoxy-D-xylulose 5-phosphate biosynthesis; 1-deoxy-D-xylulose 5-phosphate from D-glyceraldehyde 3-phosphate and pyruvate: step 1/1. Its function is as follows. Catalyzes the acyloin condensation reaction between C atoms 2 and 3 of pyruvate and glyceraldehyde 3-phosphate to yield 1-deoxy-D-xylulose-5-phosphate (DXP). In Acidobacterium capsulatum (strain ATCC 51196 / DSM 11244 / BCRC 80197 / JCM 7670 / NBRC 15755 / NCIMB 13165 / 161), this protein is 1-deoxy-D-xylulose-5-phosphate synthase.